A 526-amino-acid polypeptide reads, in one-letter code: MSKVAIIDFGSQFTQLLARRIRELNVYCEIFTPDVEFDLVKDSKAFILSGGPKSVASLAEIPKIVHNIIELNKKSSIPVLGICYGLQLLSNYFNSAIVSDCSKEFGKATLNIIKESEITKNVWEVGKRVDVWMSHADSVYNVPRGFEVIAYSVLKNVIAMICNEERKIYGMQFHPEVYHTTDGIALLSNFIKIAGCKTDWTMNSFLDEQQRVIKKQVGDKKVIAAISGGVDSSVAAALTYRAIGDQLHCIFIDNGLLRYNEAEKISQLLVNQFQMPITIVDKSSVFLNKLKSITDPEQKRKIIGKTFIEVFEGEANKIGGVEFLMQGTIYPDVIESGGAVGKESVTIKSHHNVGGLPDVMRLQLVEPLKLLFKDEVRLLGKELGISDEILMRHPFPGPGLAIRIIGEVTQEKIKMLQAADDIYINLIKKYNLYNIIWQAFAVILPVKTVGVMGDSRTYGYTCALRAVTSSDGMTAGCFPFGVDTDTKLIFYEFLQEVSNAIVNNVDGINRVVYDTTSKPPATIEWE.

Residues 3-199 (KVAIIDFGSQ…FIKIAGCKTD (197 aa)) enclose the Glutamine amidotransferase type-1 domain. The active-site Nucleophile is C83. Active-site residues include H174 and E176. Residues 200 to 392 (WTMNSFLDEQ…LGISDEILMR (193 aa)) form the GMPS ATP-PPase domain. 227–233 (SGGVDSS) is an ATP binding site.

In terms of assembly, homodimer.

It carries out the reaction XMP + L-glutamine + ATP + H2O = GMP + L-glutamate + AMP + diphosphate + 2 H(+). It participates in purine metabolism; GMP biosynthesis; GMP from XMP (L-Gln route): step 1/1. In terms of biological role, catalyzes the synthesis of GMP from XMP. In Ehrlichia canis (strain Jake), this protein is GMP synthase [glutamine-hydrolyzing].